A 185-amino-acid chain; its full sequence is Ribosome-recycling factor (185 aa).

It belongs to the RRF family.

The protein localises to the cytoplasm. Responsible for the release of ribosomes from messenger RNA at the termination of protein biosynthesis. May increase the efficiency of translation by recycling ribosomes from one round of translation to another. The polypeptide is Ribosome-recycling factor (Proteus mirabilis (strain HI4320)).